The primary structure comprises 222 residues: RRVFTLTFLFLAAEAFHLSDRIETRESETGKGLATCKKDSICAYLQQNARGVTPAHMCECPGEQTCPLSWDPDDGKTLTRGDEQYKFCSSPPQALHECKEKELVFTSKFEYEANSNPRKFLSYAGYIHCACPIGFSYHLTRRTNSTTEGQDLETVYFSCEEYKTCGTNDTCHIISESSEAFMIYKMCNCDEDLKCPTDPEAAFRTDHIEQVLDYNLYNMQCQ.

The protein belongs to the scoloptoxin-11 family. Post-translationally, contains 8 disulfide bonds. Expressed by the venom gland.

Its subcellular location is the secreted. The protein is U-scoloptoxin(11)-Sm5a of Scolopendra morsitans (Tanzanian blue ringleg centipede).